The following is a 431-amino-acid chain: Serine--tRNA ligase (431 aa).

Position 237–239 (237–239) interacts with L-serine; the sequence is TAE. 268–270 provides a ligand contact to ATP; sequence RSE. Glu291 is an L-serine binding site. 355–358 is a binding site for ATP; that stretch reads EISS. An L-serine-binding site is contributed by Ser390.

This sequence belongs to the class-II aminoacyl-tRNA synthetase family. Type-1 seryl-tRNA synthetase subfamily. As to quaternary structure, homodimer. The tRNA molecule binds across the dimer.

It is found in the cytoplasm. The enzyme catalyses tRNA(Ser) + L-serine + ATP = L-seryl-tRNA(Ser) + AMP + diphosphate + H(+). It carries out the reaction tRNA(Sec) + L-serine + ATP = L-seryl-tRNA(Sec) + AMP + diphosphate + H(+). It participates in aminoacyl-tRNA biosynthesis; selenocysteinyl-tRNA(Sec) biosynthesis; L-seryl-tRNA(Sec) from L-serine and tRNA(Sec): step 1/1. Functionally, catalyzes the attachment of serine to tRNA(Ser). Is also able to aminoacylate tRNA(Sec) with serine, to form the misacylated tRNA L-seryl-tRNA(Sec), which will be further converted into selenocysteinyl-tRNA(Sec). This Neisseria meningitidis serogroup C (strain 053442) protein is Serine--tRNA ligase.